A 328-amino-acid chain; its full sequence is Surface antigen CRP170 (328 aa).

2 repeats span residues 38-102 and 103-167; these read NAPC…CKKC.

This is Surface antigen CRP170 from Giardia intestinalis (Giardia lamblia).